The following is a 346-amino-acid chain: Angiopoietin-related protein 7 (346 aa).

An N-terminal signal peptide occupies residues 1 to 26 (MLKKPLSAVTWLCIFIVAFVSHPAWL). Positions 39-119 (QLKAANCCEE…DIMQLQAAQT (81 aa)) form a coiled coil. Residue N58 is glycosylated (N-linked (GlcNAc...) asparagine). Residues 122-343 (QTSADAIYDC…RVEMKIRPED (222 aa)) form the Fibrinogen C-terminal domain. A disulfide bridge links C131 with C162. 2 N-linked (GlcNAc...) asparagine glycosylation sites follow: N253 and N267. C285 and C298 are oxidised to a cystine.

In terms of assembly, homotetramer; disulfide-linked. Highly expressed in the cornea (at protein level). Expression is restricted to the stromal layer. Also detected at the junction between the corneal stromal layer and the conjuctiva. Not detected in the sclera.

It is found in the secreted. Functionally, has a role in the formation and organization of the extracellular matrix. In the eye, it functions as a mediator of dexamethasone-induced matrix deposition in the trabecular meshwork, the tissue responsible for the outflow of the ocular aqueous humor and for the maintenance of intraocular pressure. Is a negative regulator of angiogenesis in the cornea, and plays a major role in maintaining corneal avascularity and transparency. This Homo sapiens (Human) protein is Angiopoietin-related protein 7 (ANGPTL7).